The following is a 232-amino-acid chain: MPSQQKKIIFCMAGVFSFACALGVVTALGTPLWIKATVLCKTGALLVNASGQELDKFMGEMQYGLFHGEGVRQCGLGARPFRFSFFPDLLKAIPVSIHVNVILFSAILIVLTMVGTAFFMYNAFGKPFETLHGPLGLYLLSFISGSCGCLVMILFASEVKIHHLSEKIANYKEGTYVYKTQSEKYTTSFWVIFFCFFVHFLNGLLIRLAGFQFPFAKSKDAETTNVAADLMY.

A helical membrane pass occupies residues 8-28 (IIFCMAGVFSFACALGVVTAL). A glycan (N-linked (GlcNAc...) asparagine) is linked at N48. 3 helical membrane-spanning segments follow: residues 101-121 (VILF…FFMY), 135-155 (LGLY…MILF), and 186-206 (TTSF…GLLI).

It belongs to the clarin family. Widely expressed. Found in the retina.

It is found in the cell membrane. Functionally, may have a role in the excitatory ribbon synapse junctions between hair cells and cochlear ganglion cells and presumably also in analogous synapses within the retina. In Homo sapiens (Human), this protein is Clarin-1 (CLRN1).